Here is a 207-residue protein sequence, read N- to C-terminus: Ribosomal RNA large subunit methyltransferase E (207 aa).

The S-adenosyl-L-methionine site is built by glycine 60, tryptophan 62, aspartate 80, aspartate 96, and aspartate 121. Lysine 161 serves as the catalytic Proton acceptor.

This sequence belongs to the class I-like SAM-binding methyltransferase superfamily. RNA methyltransferase RlmE family.

It is found in the cytoplasm. The enzyme catalyses uridine(2552) in 23S rRNA + S-adenosyl-L-methionine = 2'-O-methyluridine(2552) in 23S rRNA + S-adenosyl-L-homocysteine + H(+). Functionally, specifically methylates the uridine in position 2552 of 23S rRNA at the 2'-O position of the ribose in the fully assembled 50S ribosomal subunit. The chain is Ribosomal RNA large subunit methyltransferase E from Marinobacter nauticus (strain ATCC 700491 / DSM 11845 / VT8) (Marinobacter aquaeolei).